The chain runs to 434 residues: Putative neutral sphingomyelinase (434 aa).

Mg(2+) is bound at residue glutamate 83. Catalysis depends on histidine 318, which acts as the Proton acceptor. A run of 2 helical transmembrane segments spans residues 366 to 388 (IFFF…FEVF) and 392 to 414 (FAVL…LIGL).

It belongs to the neutral sphingomyelinase family.

The protein resides in the membrane. It carries out the reaction an N-(acyl)-sphingosylphosphocholine + H2O = an N-acyl-sphingoid base + phosphocholine + H(+). The enzyme catalyses a sphingomyelin + H2O = phosphocholine + an N-acylsphing-4-enine + H(+). It catalyses the reaction an N-acyl-15-methylhexadecasphing-4-enine-1-phosphocholine + H2O = an N-acyl-15-methylhexadecasphing-4-enine + phosphocholine + H(+). It functions in the pathway lipid metabolism; sphingolipid metabolism. Functionally, catalyzes the hydrolysis of sphingomyelin producing a ceramide (N-acyl-sphingoid base) and a phosphocholine. C.elegans contain specific sphingoid bases, which are unique or different in structure compared to the sphingoid bases found in other animals. Two examples of these distinctive compounds are: 15-methylhexadecasphinganine and 15-methylhexadecasphing-4-enine. This Caenorhabditis elegans protein is Putative neutral sphingomyelinase.